We begin with the raw amino-acid sequence, 417 residues long: Calreticulin (417 aa).

Positions 1-17 (MLLSVPLLLGLLGLAAA) are cleaved as a signal peptide. Positions 18 to 197 (EPAVYFKEQF…NSQVESGSLE (180 aa)) are N-domain. Ca(2+) is bound at residue Gln26. Lys48 carries the N6-acetyllysine modification. Residues Lys62 and Lys64 each contribute to the Ca(2+) site. Position 64 is an N6-(2-hydroxyisobutyryl)lysine (Lys64). Residues Cys105 and Cys137 are joined by a disulfide bond. Residues Tyr109, Lys111, Tyr128, and Asp135 each coordinate an alpha-D-glucoside. Lys159 is modified (N6-acetyllysine). The 1-1 repeat unit spans residues 191 to 202 (VESGSLEDDWDF). A 4 X approximate repeats region spans residues 191-255 (VESGSLEDDW…DAKKPEDWDE (65 aa)). The disordered stretch occupies residues 193 to 277 (SGSLEDDWDF…NPEYKGEWKP (85 aa)). Positions 198-308 (DDWDFLPPKK…YSPDANIYAY (111 aa)) are P-domain. The segment covering 207 to 251 (KIKDPDAAKPEDWDERAKIDDPTDSKPEDWDKPEHIPDPDAKKPE) has biased composition (basic and acidic residues). N6-acetyllysine is present on Lys209. A run of 6 repeats spans residues 210–221 (DPDAAKPEDWDE), 227–238 (DPTDSKPEDWDK), 244–255 (DPDAKKPEDWDE), 259–269 (GEWEPPVIQNP), 273–283 (GEWKPRQIDNP), and 287–297 (GTWIHPEIDNP). The interaction with PPIB stretch occupies residues 237–270 (DKPEHIPDPDAKKPEDWDEEMDGEWEPPVIQNPE). A compositionally biased stretch (acidic residues) spans 252–261 (DWDEEMDGEW). Positions 259–297 (GEWEPPVIQNPEYKGEWKPRQIDNPDYKGTWIHPEIDNP) are 3 X approximate repeats. The tract at residues 309-417 (DSFAVLGLDL…TTPGQTKDEL (109 aa)) is C-domain. An alpha-D-glucoside is bound at residue Asp317. Residue Asp328 coordinates Ca(2+). Residues 350 to 417 (TKASEKQMKD…TTPGQTKDEL (68 aa)) are disordered. Residues 352–379 (ASEKQMKDKQDEEQRLKEEEEDKKRKEE) are compositionally biased toward basic and acidic residues. A compositionally biased stretch (acidic residues) spans 380–408 (EEAEDKEDEDDRDEDEEDEDEKEEDEEDT). The Prevents secretion from ER motif lies at 414–417 (KDEL).

It belongs to the calreticulin family. Monomer. Component of an EIF2 complex at least composed of CELF1/CUGBP1, CALR, CALR3, EIF2S1, EIF2S2, HSP90B1 and HSPA5. Interacts with PDIA3/ERp57 and SPACA9. Interacts with TRIM21. Interacts with NR3C1. Interacts with PPIB. Interacts (via P-domain) with PDIA5. Interacts with GABARAP. Interacts with CLCC1.

Its subcellular location is the endoplasmic reticulum lumen. The protein localises to the cytoplasm. It localises to the cytosol. It is found in the cytolytic granule. The protein resides in the secreted. Its subcellular location is the extracellular space. The protein localises to the extracellular matrix. It localises to the cell surface. It is found in the sarcoplasmic reticulum lumen. The protein resides in the cytoplasmic vesicle. Its subcellular location is the secretory vesicle. The protein localises to the cortical granule. Functionally, calcium-binding chaperone that promotes folding, oligomeric assembly and quality control in the endoplasmic reticulum (ER) via the calreticulin/calnexin cycle. This lectin interacts transiently with almost all of the monoglucosylated glycoproteins that are synthesized in the ER. Interacts with the DNA-binding domain of NR3C1 and mediates its nuclear export. Involved in maternal gene expression regulation. May participate in oocyte maturation via the regulation of calcium homeostasis. Present in the cortical granules of non-activated oocytes, is exocytosed during the cortical reaction in response to oocyte activation and might participate in the block to polyspermy. The protein is Calreticulin (CALR) of Cricetulus griseus (Chinese hamster).